The following is a 494-amino-acid chain: MAKYVVAIDQGTTSSRAIVFDYDQNMVSVAQKEFTQIYPHEGWVEHNAAEIWATQFGVLQEAIQIAGVKPEEIAAIGITNQRETTVVWDKNTGEPIYNAIVWQCRRTAPICDELKKKGLDTYIRENTGLVVDAYFSGTKIKWILDNVPGAREKANKGELLFGTIDTWLVWKLTGGKVHVTDYTNASRTMIYNIKELKWDETILKELDIPMSMLPEVKDSSCIYGYAHINGKEVPISGIAGDQQSALFGQAGFNKGDTKNTYGTGSFILMNIGENFILSKNGLITTIAIGYNGKIEYALEGSVFIAGAVIQWVRDELRLLHDAKDTEYFATKVKDTNGVYLVPAFVGLGAPYWDMYARGCLVGITRGVNRSHIIRAAEEAIAYQSKDVIDAMVADSGVKLSSLKVDGGACRDNFLMQFQSDIINTKVLRPQITETTALGAAYLAGLAVGFWKDKDEITNRWKLEREFTPSLSEEERNKKYMGWKKAVERSRGWAL.

Thr12 provides a ligand contact to ADP. 3 residues coordinate ATP: Thr12, Thr13, and Ser14. Thr12 serves as a coordination point for sn-glycerol 3-phosphate. Arg16 contacts ADP. Positions 82, 83, 134, and 241 each coordinate sn-glycerol 3-phosphate. Residues Arg82, Glu83, Tyr134, Asp241, and Gln242 each contribute to the glycerol site. ADP-binding residues include Thr263 and Gly306. Residues Thr263, Gly306, Gln310, and Gly407 each coordinate ATP. An ADP-binding site is contributed by Gly407.

It belongs to the FGGY kinase family.

It carries out the reaction glycerol + ATP = sn-glycerol 3-phosphate + ADP + H(+). Its pathway is polyol metabolism; glycerol degradation via glycerol kinase pathway; sn-glycerol 3-phosphate from glycerol: step 1/1. Inhibited by fructose 1,6-bisphosphate (FBP). Its function is as follows. Key enzyme in the regulation of glycerol uptake and metabolism. Catalyzes the phosphorylation of glycerol to yield sn-glycerol 3-phosphate. The protein is Glycerol kinase of Brachyspira hyodysenteriae (strain ATCC 49526 / WA1).